The following is a 432-amino-acid chain: uncharacterized protein (432 aa).

Lys243 carries the post-translational modification N6-(pyridoxal phosphate)lysine.

This sequence belongs to the class-II pyridoxal-phosphate-dependent aminotransferase family. It depends on pyridoxal 5'-phosphate as a cofactor.

Its subcellular location is the cytoplasm. This is an uncharacterized protein from Methanocaldococcus jannaschii (strain ATCC 43067 / DSM 2661 / JAL-1 / JCM 10045 / NBRC 100440) (Methanococcus jannaschii).